Here is a 546-residue protein sequence, read N- to C-terminus: Probable acyl-activating enzyme 21 (546 aa).

It belongs to the ATP-dependent AMP-binding enzyme family.

Functionally, may act as an acid--thiol ligase that activates carboxylic acids by forming acyl-CoAs. The polypeptide is Probable acyl-activating enzyme 21 (AEE21) (Arabidopsis thaliana (Mouse-ear cress)).